The following is a 451-amino-acid chain: uncharacterized protein (451 aa).

Residues 2 to 60 (NVVLKQRIPLKIKRMGINGEGIGFYKKTLIFVPGALKGEEVFCQISSVRRNFAEAKLLK) enclose the TRAM domain. [4Fe-4S] cluster contacts are provided by Cys73, Cys79, Cys82, and Cys162. S-adenosyl-L-methionine-binding residues include Gln283, Tyr312, Asp333, and Asp381. Cys408 (nucleophile) is an active-site residue.

Belongs to the class I-like SAM-binding methyltransferase superfamily. RNA M5U methyltransferase family.

This is an uncharacterized protein from Streptococcus agalactiae serotype III (strain NEM316).